The following is an 83-amino-acid chain: uncharacterized protein (83 aa).

Residues 58 to 83 form a disordered region; it reads EHGHDDEYDEFSDPNAWVPRRSRDTG.

This is an uncharacterized protein from Mycobacterium tuberculosis (strain CDC 1551 / Oshkosh).